Reading from the N-terminus, the 309-residue chain is UDP-N-acetylenolpyruvoylglucosamine reductase (309 aa).

The 188-residue stretch at 34 to 221 (RVGGPAQVLF…TAAREAAQPI (188 aa)) folds into the FAD-binding PCMH-type domain. Arg-179 is an active-site residue. The Proton donor role is filled by Ser-228. The active site involves Glu-298.

Belongs to the MurB family. FAD serves as cofactor.

The protein localises to the cytoplasm. The enzyme catalyses UDP-N-acetyl-alpha-D-muramate + NADP(+) = UDP-N-acetyl-3-O-(1-carboxyvinyl)-alpha-D-glucosamine + NADPH + H(+). Its pathway is cell wall biogenesis; peptidoglycan biosynthesis. Its function is as follows. Cell wall formation. The polypeptide is UDP-N-acetylenolpyruvoylglucosamine reductase (Methylorubrum extorquens (strain CM4 / NCIMB 13688) (Methylobacterium extorquens)).